Consider the following 262-residue polypeptide: Beta-phosphoglucomutase (262 aa).

Aspartate 29 serves as the catalytic Nucleophile. Mg(2+)-binding residues include aspartate 29 and aspartate 31. The residue at position 29 (aspartate 29) is a 4-aspartylphosphate. Aspartate 31 functions as the Proton donor/acceptor in the catalytic mechanism. The beta-D-glucose 6-phosphate site is built by aspartate 31, glycine 79, arginine 82, serine 157, and asparagine 159. Residue aspartate 215 coordinates Mg(2+).

The protein belongs to the HAD-like hydrolase superfamily. CbbY/CbbZ/Gph/YieH family. Monomer. It depends on Mg(2+) as a cofactor. Autophosphorylated.

The enzyme catalyses beta-D-glucose 1-phosphate = beta-D-glucose 6-phosphate. Functionally, catalyzes the interconversion of D-glucose 1-phosphate (G1P) and D-glucose 6-phosphate (G6P), forming beta-D-glucose 1,6-(bis)phosphate (beta-G16P) as an intermediate. The chain is Beta-phosphoglucomutase from Mycobacterium bovis (strain ATCC BAA-935 / AF2122/97).